The sequence spans 299 residues: Pantothenate synthetase (299 aa).

41–48 serves as a coordination point for ATP; that stretch reads MGALHEGH. His48 acts as the Proton donor in catalysis. Residue Gln72 participates in (R)-pantoate binding. Gln72 is a binding site for beta-alanine. 158–161 lines the ATP pocket; sequence GQKD. Position 164 (Gln164) interacts with (R)-pantoate. ATP contacts are provided by residues Val187 and 195-198; that span reads MSSR.

The protein belongs to the pantothenate synthetase family. Homodimer.

Its subcellular location is the cytoplasm. The enzyme catalyses (R)-pantoate + beta-alanine + ATP = (R)-pantothenate + AMP + diphosphate + H(+). The protein operates within cofactor biosynthesis; (R)-pantothenate biosynthesis; (R)-pantothenate from (R)-pantoate and beta-alanine: step 1/1. In terms of biological role, catalyzes the condensation of pantoate with beta-alanine in an ATP-dependent reaction via a pantoyl-adenylate intermediate. This Acidobacterium capsulatum (strain ATCC 51196 / DSM 11244 / BCRC 80197 / JCM 7670 / NBRC 15755 / NCIMB 13165 / 161) protein is Pantothenate synthetase.